Here is a 413-residue protein sequence, read N- to C-terminus: Calmodulin-binding protein CmbB (413 aa).

6 FNIP repeats span residues 104-148 (FNHP…LSDC), 149-192 (YNQA…LGKG), 222-257 (SLPPNLEFLLLSDAFNHPIEAGMLPPKLKTLTFGDG), 258-301 (FNQP…FHQF), 304-343 (FSQTFENIPSHVQTVEFGYTYNKPITSLPSHLKYIKFSEK), and 344-386 (YNHP…LNGY).

As to quaternary structure, interacts with calmodulin in the presence of Ca(2+).

The polypeptide is Calmodulin-binding protein CmbB (Dictyostelium discoideum (Social amoeba)).